Reading from the N-terminus, the 225-residue chain is UPF0173 metal-dependent hydrolase PH1671 (225 aa).

The protein belongs to the UPF0173 family.

The chain is UPF0173 metal-dependent hydrolase PH1671 from Pyrococcus horikoshii (strain ATCC 700860 / DSM 12428 / JCM 9974 / NBRC 100139 / OT-3).